Reading from the N-terminus, the 391-residue chain is Na(+)/H(+) antiporter NhaA (391 aa).

Transmembrane regions (helical) follow at residues 14-34, 59-79, 95-115, 124-144, 154-174, 177-197, 213-233, 261-281, 287-307, 328-348, and 363-383; these read AGGI…NSPL, LLLW…GLEV, SLPT…YLFF, VGWA…MALL, VFLL…IALF, TDLS…LVAL, IILW…GVVI, FLIL…NVGF, PVPV…VLLF, IAPV…IASL, and IGIL…LSKV.

The protein belongs to the NhaA Na(+)/H(+) (TC 2.A.33) antiporter family.

Its subcellular location is the cell inner membrane. The catalysed reaction is Na(+)(in) + 2 H(+)(out) = Na(+)(out) + 2 H(+)(in). Na(+)/H(+) antiporter that extrudes sodium in exchange for external protons. The chain is Na(+)/H(+) antiporter NhaA from Shewanella amazonensis (strain ATCC BAA-1098 / SB2B).